A 540-amino-acid polypeptide reads, in one-letter code: GMP synthase [glutamine-hydrolyzing] (540 aa).

The region spanning 26–216 (LIIILDFGSQ…VYHICDCEPT (191 aa)) is the Glutamine amidotransferase type-1 domain. The Nucleophile role is filled by cysteine 103. Residues histidine 190 and glutamate 192 contribute to the active site. The 199-residue stretch at 217 to 415 (WTTAAFVEEA…IGLPEEIVQR (199 aa)) folds into the GMPS ATP-PPase domain. Residue 244–250 (SGGVDSS) coordinates ATP.

As to quaternary structure, homodimer.

It catalyses the reaction XMP + L-glutamine + ATP + H2O = GMP + L-glutamate + AMP + diphosphate + 2 H(+). It participates in purine metabolism; GMP biosynthesis; GMP from XMP (L-Gln route): step 1/1. In terms of biological role, catalyzes the synthesis of GMP from XMP. The protein is GMP synthase [glutamine-hydrolyzing] of Nostoc punctiforme (strain ATCC 29133 / PCC 73102).